Consider the following 186-residue polypeptide: Ribonuclease M5 (186 aa).

Positions 4–94 (KEIIVVEGRD…AKPKNKRGIG (91 aa)) constitute a Toprim domain. Mg(2+)-binding residues include glutamate 10, aspartate 56, and aspartate 58.

The protein belongs to the ribonuclease M5 family. Requires ribosomal protein L18 (rplR) for catalysis; it can be replaced by 30% dimethylsulfoxide suggesting L18 functions as an rRNA folding chaperone. Mg(2+) serves as cofactor. The cofactor is Mn(2+). Ca(2+) is required as a cofactor.

The protein localises to the cytoplasm. It carries out the reaction Endonucleolytic cleavage of RNA, removing 21 and 42 nucleotides, respectively, from the 5'- and 3'-termini of a 5S-rRNA precursor.. Functionally, required for correct processing of both the 5' and 3' ends of 5S rRNA precursor. Cleaves both sides of a double-stranded region yielding mature 5S rRNA in one step. Releases 5'-phosphoryl and 3'-hydroxy termini. This Bacillus subtilis (strain 168) protein is Ribonuclease M5.